The following is a 284-amino-acid chain: 4-hydroxybenzoate octaprenyltransferase (284 aa).

7 helical membrane passes run 33 to 53 (VIAA…LGVF), 93 to 113 (IGLF…MNPL), 136 to 156 (HIPQ…AWAA), 159 to 179 (GELP…TIAY), 209 to 229 (LIIG…GQFY), 235 to 252 (YYWT…QQHL), and 264 to 284 (AFLN…VAFW).

It belongs to the UbiA prenyltransferase family. Requires Mg(2+) as cofactor.

The protein resides in the cell inner membrane. It catalyses the reaction all-trans-octaprenyl diphosphate + 4-hydroxybenzoate = 4-hydroxy-3-(all-trans-octaprenyl)benzoate + diphosphate. It participates in cofactor biosynthesis; ubiquinone biosynthesis. Functionally, catalyzes the prenylation of para-hydroxybenzoate (PHB) with an all-trans polyprenyl group. Mediates the second step in the final reaction sequence of ubiquinone-8 (UQ-8) biosynthesis, which is the condensation of the polyisoprenoid side chain with PHB, generating the first membrane-bound Q intermediate 3-octaprenyl-4-hydroxybenzoate. The protein is 4-hydroxybenzoate octaprenyltransferase of Vibrio parahaemolyticus serotype O3:K6 (strain RIMD 2210633).